Reading from the N-terminus, the 1341-residue chain is DNA-directed RNA polymerase subunit beta (1341 aa).

It belongs to the RNA polymerase beta chain family. The RNAP catalytic core consists of 2 alpha, 1 beta, 1 beta' and 1 omega subunit. When a sigma factor is associated with the core the holoenzyme is formed, which can initiate transcription.

It catalyses the reaction RNA(n) + a ribonucleoside 5'-triphosphate = RNA(n+1) + diphosphate. In terms of biological role, DNA-dependent RNA polymerase catalyzes the transcription of DNA into RNA using the four ribonucleoside triphosphates as substrates. The chain is DNA-directed RNA polymerase subunit beta from Pseudoalteromonas translucida (strain TAC 125).